The primary structure comprises 248 residues: 1-(5-phosphoribosyl)-5-[(5-phosphoribosylamino)methylideneamino] imidazole-4-carboxamide isomerase (248 aa).

The active-site Proton acceptor is the aspartate 8. The active-site Proton donor is the aspartate 129.

This sequence belongs to the HisA/HisF family.

It localises to the cytoplasm. It carries out the reaction 1-(5-phospho-beta-D-ribosyl)-5-[(5-phospho-beta-D-ribosylamino)methylideneamino]imidazole-4-carboxamide = 5-[(5-phospho-1-deoxy-D-ribulos-1-ylimino)methylamino]-1-(5-phospho-beta-D-ribosyl)imidazole-4-carboxamide. The protein operates within amino-acid biosynthesis; L-histidine biosynthesis; L-histidine from 5-phospho-alpha-D-ribose 1-diphosphate: step 4/9. The polypeptide is 1-(5-phosphoribosyl)-5-[(5-phosphoribosylamino)methylideneamino] imidazole-4-carboxamide isomerase (Sinorhizobium medicae (strain WSM419) (Ensifer medicae)).